Consider the following 312-residue polypeptide: Pantothenate kinase (312 aa).

ATP is bound at residue Gly97–Ser104.

It belongs to the prokaryotic pantothenate kinase family.

It localises to the cytoplasm. The enzyme catalyses (R)-pantothenate + ATP = (R)-4'-phosphopantothenate + ADP + H(+). The protein operates within cofactor biosynthesis; coenzyme A biosynthesis; CoA from (R)-pantothenate: step 1/5. The protein is Pantothenate kinase of Mycobacterium sp. (strain JLS).